Consider the following 506-residue polypeptide: Beta-glucosidase 13 (506 aa).

The N-terminal stretch at 1–25 (MAAAGEVVMLGGILLPLLLVVAVSG) is a signal peptide. Glutamine 49 lines the a beta-D-glucoside pocket. Asparagine 118 carries N-linked (GlcNAc...) asparagine glycosylation. A beta-D-glucoside-binding positions include histidine 153 and 198–199 (NE). The active-site Proton donor is the glutamate 199. An intrachain disulfide couples cysteine 219 to cysteine 226. N-linked (GlcNAc...) asparagine glycosylation is present at asparagine 225. A beta-D-glucoside is bound at residue tyrosine 342. 2 N-linked (GlcNAc...) asparagine glycosylation sites follow: asparagine 357 and asparagine 367. Glutamate 413 lines the a beta-D-glucoside pocket. The active-site Nucleophile is the glutamate 413. Residue asparagine 421 is glycosylated (N-linked (GlcNAc...) asparagine). Residues tryptophan 462, 469–470 (EW), and phenylalanine 478 each bind a beta-D-glucoside.

The protein belongs to the glycosyl hydrolase 1 family.

It catalyses the reaction Hydrolysis of terminal, non-reducing beta-D-glucosyl residues with release of beta-D-glucose.. This chain is Beta-glucosidase 13 (BGLU13), found in Oryza sativa subsp. japonica (Rice).